The sequence spans 201 residues: Large ribosomal subunit protein bL25 (201 aa).

This sequence belongs to the bacterial ribosomal protein bL25 family. CTC subfamily. As to quaternary structure, part of the 50S ribosomal subunit; part of the 5S rRNA/L5/L18/L25 subcomplex. Contacts the 5S rRNA. Binds to the 5S rRNA independently of L5 and L18.

Functionally, this is one of the proteins that binds to the 5S RNA in the ribosome where it forms part of the central protuberance. The protein is Large ribosomal subunit protein bL25 of Burkholderia lata (strain ATCC 17760 / DSM 23089 / LMG 22485 / NCIMB 9086 / R18194 / 383).